The primary structure comprises 416 residues: Adenylosuccinate synthetase (416 aa).

GTP-binding positions include 13-19 (GDEGKGK) and 41-43 (GHT). Aspartate 14 acts as the Proton acceptor in catalysis. Aspartate 14 and glycine 41 together coordinate Mg(2+). IMP-binding positions include 14 to 17 (DEGK), 39 to 42 (NAGH), threonine 126, arginine 140, glutamine 220, threonine 235, and arginine 299. The active-site Proton donor is histidine 42. 295–301 (TTTGRRR) is a substrate binding site. Residues arginine 301, 327–329 (KLD), and 405–407 (STS) contribute to the GTP site.

This sequence belongs to the adenylosuccinate synthetase family. In terms of assembly, homodimer. Requires Mg(2+) as cofactor.

It is found in the cytoplasm. The enzyme catalyses IMP + L-aspartate + GTP = N(6)-(1,2-dicarboxyethyl)-AMP + GDP + phosphate + 2 H(+). Its pathway is purine metabolism; AMP biosynthesis via de novo pathway; AMP from IMP: step 1/2. Functionally, plays an important role in the de novo pathway of purine nucleotide biosynthesis. Catalyzes the first committed step in the biosynthesis of AMP from IMP. The polypeptide is Adenylosuccinate synthetase (Campylobacter curvus (strain 525.92)).